We begin with the raw amino-acid sequence, 370 residues long: Keratin-associated protein 10-7 (370 aa).

The tract at residues 36–363 (DCPESCCEPP…CSRPACCGPT (328 aa)) is 30 X 5 AA repeats of C-C-X(3). 30 consecutive repeat copies span residues 41–45 (CCEPP), 46–50 (CCAPA), 67–71 (CCRVT), 89–93 (CCQQS), 99–103 (CCASS), 109–113 (CCVPV), 114–118 (CCKTV), 119–123 (CCKPV), 135–139 (CCQQS), 145–149 (CCTSS), 155–159 (CCVPI), 160–164 (CCKPV), 172–176 (CCQQS), 186–190 (CCQAV), 208–212 (CCQQS), 218–222 (CCTSS), 228–232 (CCVPV), 233–237 (CCKPV), 238–242 (CCVPT), 250–254 (CCQPA), 255–259 (CCTSS), 265–269 (CCVPV), 270–274 (CCKPV), 275–279 (CCVPV), 287–291 (CCQQS), 297–301 (CCTTS), 302–306 (CCRPS), 321–325 (CCVPV), 339–343 (CCRPA), and 359–363 (CCGPT).

Belongs to the KRTAP type 10 family. In terms of assembly, interacts with hair keratins. In terms of tissue distribution, restricted to a narrow region of the hair fiber cuticle, lying approximately 20 cell layers above the apex of the dermal papilla of the hair root; not detected in any other tissues.

Its function is as follows. In the hair cortex, hair keratin intermediate filaments are embedded in an interfilamentous matrix, consisting of hair keratin-associated proteins (KRTAP), which are essential for the formation of a rigid and resistant hair shaft through their extensive disulfide bond cross-linking with abundant cysteine residues of hair keratins. The matrix proteins include the high-sulfur and high-glycine-tyrosine keratins. The chain is Keratin-associated protein 10-7 (KRTAP10-7) from Homo sapiens (Human).